A 215-amino-acid polypeptide reads, in one-letter code: Cytochrome b6 (215 aa).

The helical transmembrane segment at 32–52 (IFYCLGGITLTCFLVQVATGF) threads the bilayer. C35 serves as a coordination point for heme c. Heme b-binding residues include H86 and H100. The next 3 helical transmembrane spans lie at 90–110 (ASMM…TGGF), 116–136 (LTWV…VTGY), and 186–206 (LHTF…FPMI). Residues H187 and H202 each contribute to the heme b site.

This sequence belongs to the cytochrome b family. PetB subfamily. As to quaternary structure, the 4 large subunits of the cytochrome b6-f complex are cytochrome b6, subunit IV (17 kDa polypeptide, PetD), cytochrome f and the Rieske protein, while the 4 small subunits are PetG, PetL, PetM and PetN. The complex functions as a dimer. Heme b serves as cofactor. Heme c is required as a cofactor.

Its subcellular location is the plastid. The protein localises to the chloroplast thylakoid membrane. Functionally, component of the cytochrome b6-f complex, which mediates electron transfer between photosystem II (PSII) and photosystem I (PSI), cyclic electron flow around PSI, and state transitions. The sequence is that of Cytochrome b6 from Liriodendron tulipifera (Tuliptree).